A 391-amino-acid polypeptide reads, in one-letter code: MAIINMSDLDLQGKRVLIREDLNVPVSNGVVTSDARLRASLPTIELALAKGAAVMVMSHLGRPTEGEYNPEYSMQPVVDYLAKALSCPVRLATDYLDGVDVAVGEVVVFENVRFNVGEGKNNEALSQKMAALCDVYVMDAFGTAHRAQASTHGVGMFAPIACAGPLLAQELDALGKALDNPARPMVAIVGGSKVSTKLTVLESLSGIVDQLVVGGGIANTFIAAAGYNVGKSLYEADLIDEAKRLVANAKSRGADIPVPTDVVVAGEFSPTAAATLKSVSEVADGEMIFDIGPDSAEALAKIIESAGTIVWNGPVGVFEFDQFGEGTKRIAQAIADSKAFSIAGGGDTLAAVDKYGIADKVSYISTGGGAFLEFLEGKELPAVAMLEKRGA.

Substrate-binding positions include 21 to 23, R36, 59 to 62, R113, and R146; these read DLN and HLGR. ATP-binding positions include K197, E319, and 345–348; that span reads GGDT.

The protein belongs to the phosphoglycerate kinase family. As to quaternary structure, monomer.

Its subcellular location is the cytoplasm. It catalyses the reaction (2R)-3-phosphoglycerate + ATP = (2R)-3-phospho-glyceroyl phosphate + ADP. It functions in the pathway carbohydrate degradation; glycolysis; pyruvate from D-glyceraldehyde 3-phosphate: step 2/5. The sequence is that of Phosphoglycerate kinase from Shewanella baltica (strain OS195).